The primary structure comprises 1347 residues: Agglutinin-like protein 5 (1347 aa).

An N-terminal signal peptide occupies residues 1-19 (MIQQFTLLFLYLSFATAKA). Intrachain disulfides connect Cys73–Cys150, Cys96–Cys112, Cys205–Cys298, and Cys227–Cys256. ALS repeat units lie at residues 365 to 396 (TTIT…VDVP), 401 to 432 (TTVT…VQVP), 438 to 469 (TTTT…VREP), 474 to 505 (VTTT…VREP), 510 to 541 (VTTT…IKEP), and 546 to 577 (VTTT…IHDP). Disordered regions lie at residues 580-678 (ESSS…WDSS), 704-725 (VSNS…SNTS), and 789-813 (SDPT…FSDE). N-linked (GlcNAc...) asparagine glycans are attached at residues Asn593 and Asn723. The N-linked (GlcNAc...) asparagine glycan is linked to Asn847. Disordered stretches follow at residues 855–896 (ESES…STVT), 909–964 (TGMP…KSSV), 977–1021 (SETS…KESS), 1062–1111 (EDNE…VSSL), and 1139–1180 (ATSL…NRLS). 3 stretches are compositionally biased toward low complexity: residues 856-870 (SESS…ASES), 879-896 (SEST…STVT), and 921-939 (TSDV…PTSA). Residues 940 to 950 (EQSITDNPNID) show a composition bias toward polar residues. 2 stretches are compositionally biased toward low complexity: residues 951–964 (SSQT…KSSV) and 977–1002 (SETS…NSDT). Polar residues-rich tracts occupy residues 1003 to 1021 (GNIN…KESS) and 1066 to 1088 (PNTF…SVLS). Composition is skewed to low complexity over residues 1097–1111 (IKTS…VSSL) and 1140–1158 (TSLR…SSGT). N-linked (GlcNAc...) asparagine glycans are attached at residues Asn1229 and Asn1254. Ser1326 is lipidated: GPI-anchor amidated serine. Residues 1327–1347 (SATKHPSWLLKFISVALFFFL) constitute a propeptide, removed in mature form.

Belongs to the ALS family. In terms of assembly, forms homodimers through the tandem repeats. Aggregates in amyloid-like structures, with self-propagating secondary-structure changes, amyloid-characteristic dye binding, and induced birefringence. The GPI-anchor is attached to the protein in the endoplasmic reticulum and serves to target the protein to the cell surface. There, the glucosamine-inositol phospholipid moiety is cleaved off and the GPI-modified mannoprotein is covalently attached via its lipidless GPI glycan remnant to the 1,6-beta-glucan of the outer cell wall layer.

Its subcellular location is the cell membrane. The protein resides in the secreted. It localises to the cell wall. Cell surface adhesion protein which mediates both yeast-to-host tissue adherence and yeast aggregation. Plays an important role in the pathogenesis of C.albicans infections. Forms amyloid structures, essential for cell-cell association and cell-substrate adhesion to polystyrene. This Candida albicans (strain SC5314 / ATCC MYA-2876) (Yeast) protein is Agglutinin-like protein 5 (ALS5).